We begin with the raw amino-acid sequence, 103 residues long: MYAVILSGGKQHRVAEGQVLRLEKLEAATGAAVEFDKVLMVTNGDDVKVGAPYVAGGKVVAEVVAHGRGDKVHIVKFRRRKHHRKQAGHRQWFTEVKITAINA.

This sequence belongs to the bacterial ribosomal protein bL21 family. Part of the 50S ribosomal subunit. Contacts protein L20.

In terms of biological role, this protein binds to 23S rRNA in the presence of protein L20. This chain is Large ribosomal subunit protein bL21, found in Tolumonas auensis (strain DSM 9187 / NBRC 110442 / TA 4).